We begin with the raw amino-acid sequence, 517 residues long: Nicotine N-demethylase CYP82E4 (517 aa).

Residues 2 to 22 form a helical membrane-spanning segment; that stretch reads LSPIEAIVGLVTFTFLFYFLW. A Glycyl lysine isopeptide (Lys-Gly) (interchain with G-Cter in ubiquitin) cross-link involves residue Lys-254. A heme-binding site is contributed by Cys-457.

This sequence belongs to the cytochrome P450 family. CYP82E2 subfamily. Heme is required as a cofactor. Expressed in leaves.

It localises to the membrane. It carries out the reaction (S)-nicotine + reduced [NADPH--hemoprotein reductase] + O2 = (S)-nornicotine + formaldehyde + oxidized [NADPH--hemoprotein reductase] + H2O + H(+). It functions in the pathway alkaloid biosynthesis; nicotine biosynthesis. In terms of biological role, involved in the biosynthesis of pyridine alkaloid natural products, leading mainly to the production of anabasine, anatabine, nicotine and nornicotine, effective deterrents against herbivores with antiparasitic and pesticide properties (neurotoxins); nornicotine serves as the precursor in the synthesis of the carcinogen compound N'-nitrosonornicotine (NNN). Catalyzes the demethylation of nicotine to form nornicotine. In Nicotiana tomentosiformis (Tobacco), this protein is Nicotine N-demethylase CYP82E4.